A 116-amino-acid chain; its full sequence is UPF0298 protein EF_2453 (116 aa).

Belongs to the UPF0298 family.

The protein localises to the cytoplasm. The polypeptide is UPF0298 protein EF_2453 (Enterococcus faecalis (strain ATCC 700802 / V583)).